The following is a 397-amino-acid chain: Succinate--CoA ligase [ADP-forming] subunit beta (397 aa).

Positions 9-244 (KEIMKQYGIS…LTEEDPREVQ (236 aa)) constitute an ATP-grasp domain. ATP contacts are provided by residues K46, 53 to 55 (GRG), E99, L102, and E107. Mg(2+) contacts are provided by N199 and D213. Substrate is bound by residues N264 and 321-323 (GIM).

Belongs to the succinate/malate CoA ligase beta subunit family. As to quaternary structure, heterotetramer of two alpha and two beta subunits. Requires Mg(2+) as cofactor.

It catalyses the reaction succinate + ATP + CoA = succinyl-CoA + ADP + phosphate. It carries out the reaction GTP + succinate + CoA = succinyl-CoA + GDP + phosphate. The protein operates within carbohydrate metabolism; tricarboxylic acid cycle; succinate from succinyl-CoA (ligase route): step 1/1. Succinyl-CoA synthetase functions in the citric acid cycle (TCA), coupling the hydrolysis of succinyl-CoA to the synthesis of either ATP or GTP and thus represents the only step of substrate-level phosphorylation in the TCA. The beta subunit provides nucleotide specificity of the enzyme and binds the substrate succinate, while the binding sites for coenzyme A and phosphate are found in the alpha subunit. This chain is Succinate--CoA ligase [ADP-forming] subunit beta, found in Alkaliphilus metalliredigens (strain QYMF).